The following is a 361-amino-acid chain: tRNA/tmRNA (uracil-C(5))-methyltransferase (361 aa).

Residues Q183, Y211, N216, E232, and D294 each contribute to the S-adenosyl-L-methionine site. Catalysis depends on C319, which acts as the Nucleophile. E353 serves as the catalytic Proton acceptor.

Belongs to the class I-like SAM-binding methyltransferase superfamily. RNA M5U methyltransferase family. TrmA subfamily.

It catalyses the reaction uridine(54) in tRNA + S-adenosyl-L-methionine = 5-methyluridine(54) in tRNA + S-adenosyl-L-homocysteine + H(+). The enzyme catalyses uridine(341) in tmRNA + S-adenosyl-L-methionine = 5-methyluridine(341) in tmRNA + S-adenosyl-L-homocysteine + H(+). Dual-specificity methyltransferase that catalyzes the formation of 5-methyluridine at position 54 (m5U54) in all tRNAs, and that of position 341 (m5U341) in tmRNA (transfer-mRNA). The sequence is that of tRNA/tmRNA (uracil-C(5))-methyltransferase from Acinetobacter baumannii (strain AYE).